Consider the following 842-residue polypeptide: MVLSQDVRGASVRRRNRPTVVCTNCKRRKSKCDRQNPCSNCVRFGNKDTCHYVQNPKNTESQHGEDTDNKVKKQQPQMIKGKRNGTSSSIVGSKASSISPTGQSLDVPLVLSGKNYVNLSPSGNFVEFKRSAVTMFSYFCKRAIQDRDLYLKALVTFRSIAVEMTTNTLRGTKNYSKNPSLPESFKPLSIFDADGDPLSSDSLFRQHQLIHKSLFDKYGKYRKDEAIKIVDVCELLNDNLPSRSLFIDHILVHFESHVIHMVPIFEMEFLKYDVNNFYDKWEQSREISVKDFDHMVCCVILLITKICILSTKFARLPSELLEHFEKLDTSKYIAIIHYYMFEMKSLRKCTLRQLQILLLLRFYHWCAPEDGDGDSLQHSHILMGTIIASCQEMGISWLCIRDPGIYWFQLFGQSKRVPFILSPEDFKIIYQMIWSYVLHWDRKMFLINGQECLIGKSHLYDVTGQELSWHHRMVALDHIIMKMNDILNDSPSRVDIVALKQEWNNALRIFELIRDTKKEHLHLNFEYETTLELFRLCLSHAELTHLEQVNDVESFHLTVQSLWDQIVKLASKCHRYFYGPQEMDPYSRFFTNKIISVVADKLCTLIPAFVLRLNRFGEMGFDQMNMMVKFLFGVCSMYYNELGFDYYRCFESMFTAKISYKILNRPRNKNPWEIILEFLLCQLEKEGIKDQLRELKIIQNLPVLVSLRESLNLIPEYHRDAVKLWNTDVVPIGHSSVNFTLNLREESLEPFLVDRYSQTFNIFTSFYDHASSQLAEEAEDTSSKIQYNVENSAEQAQEIAETNAVPVEHPLSLEPTNPVNLEESNLELIRNMFEPLDFISFF.

The segment at residues 22-50 is a DNA-binding region (zn(2)-C6 fungal-type); it reads CTNCKRRKSKCDRQNPCSNCVRFGNKDTC. A disordered region spans residues 55–101; sequence NPKNTESQHGEDTDNKVKKQQPQMIKGKRNGTSSSIVGSKASSISPT. Positions 60-71 are enriched in basic and acidic residues; it reads ESQHGEDTDNKV. The span at 87–99 shows a compositional bias: low complexity; it reads SSSIVGSKASSIS.

Belongs to the OAF3 family.

It is found in the cytoplasm. The protein resides in the nucleus. It localises to the mitochondrion. Its function is as follows. Transcriptional inhibitor with a significantly increased number of target genes in response to oleate. In Zygosaccharomyces rouxii (strain ATCC 2623 / CBS 732 / NBRC 1130 / NCYC 568 / NRRL Y-229), this protein is Oleate activated transcription factor 3 (OAF3).